The primary structure comprises 281 residues: Pantothenate synthetase (281 aa).

31–38 contacts ATP; sequence MGNLHAGH. The active-site Proton donor is His38. Gln62 serves as a coordination point for (R)-pantoate. Beta-alanine is bound at residue Gln62. 150–153 contributes to the ATP binding site; it reads GKKD. Gln156 contributes to the (R)-pantoate binding site. ATP contacts are provided by residues Val179 and 187-190; that span reads MSSR.

Belongs to the pantothenate synthetase family. Homodimer.

It is found in the cytoplasm. The catalysed reaction is (R)-pantoate + beta-alanine + ATP = (R)-pantothenate + AMP + diphosphate + H(+). It participates in cofactor biosynthesis; (R)-pantothenate biosynthesis; (R)-pantothenate from (R)-pantoate and beta-alanine: step 1/1. Functionally, catalyzes the condensation of pantoate with beta-alanine in an ATP-dependent reaction via a pantoyl-adenylate intermediate. The protein is Pantothenate synthetase of Xylella fastidiosa (strain M23).